The sequence spans 257 residues: MNPLIIKLGGVLLDSEEALERLFTALVNYRESHQRPLVIVHGGGCVVDELMKGLNLPVKKKDGLRVTPADQIGIITGALAGTANKTLLAWAKKHHIASVGLFLGDGDSVNVTQLDEALGHVGLAQPGSPKLINMLLENGFLPVVSSIGVTDDGQLMNVNADQAATALAATLGADLILLSDVSGILDGKGQRIAEMTASKAEQLIDQGIITDGMIVKVNAALDAARALGRPVDIASWRHAEQLPALFNGTPIGTRILA.

Substrate is bound by residues 43–44 (GG), R65, and N157. Residues 180–185 (DVSGIL) and 208–210 (IIT) contribute to the ATP site.

It belongs to the acetylglutamate kinase family. ArgB subfamily. Homodimer.

The protein resides in the cytoplasm. The catalysed reaction is N-acetyl-L-glutamate + ATP = N-acetyl-L-glutamyl 5-phosphate + ADP. It participates in amino-acid biosynthesis; L-arginine biosynthesis; N(2)-acetyl-L-ornithine from L-glutamate: step 2/4. Functionally, catalyzes the ATP-dependent phosphorylation of N-acetyl-L-glutamate. This Salmonella paratyphi A (strain AKU_12601) protein is Acetylglutamate kinase.